The chain runs to 375 residues: Methylthioribose-1-phosphate isomerase (375 aa).

D257 acts as the Proton donor in catalysis.

Belongs to the eIF-2B alpha/beta/delta subunits family. MtnA subfamily.

It localises to the cytoplasm. It is found in the nucleus. The enzyme catalyses 5-(methylsulfanyl)-alpha-D-ribose 1-phosphate = 5-(methylsulfanyl)-D-ribulose 1-phosphate. It participates in amino-acid biosynthesis; L-methionine biosynthesis via salvage pathway; L-methionine from S-methyl-5-thio-alpha-D-ribose 1-phosphate: step 1/6. Catalyzes the interconversion of methylthioribose-1-phosphate (MTR-1-P) into methylthioribulose-1-phosphate (MTRu-1-P). The polypeptide is Methylthioribose-1-phosphate isomerase (Leishmania major).